The sequence spans 911 residues: Eukaryotic translation initiation factor 3 subunit C (911 aa).

Disordered stretches follow at residues 1–38 (MSRF…DDEE) and 155–181 (SRFR…GEAA). Over residues 11 to 20 (SESESSEEEV) the composition is skewed to acidic residues. The segment covering 23-32 (PNFNKASAFQ) has biased composition (polar residues). Ser34, Ser165, Ser175, and Ser184 each carry phosphoserine. The span at 162–171 (DQESEAEDEE) shows a compositional bias: acidic residues. Low complexity predominate over residues 196-208 (APKIAKSAPAKSV). The tract at residues 196 to 284 (APKIAKSAPA…KRAEDDEDGE (89 aa)) is disordered. Positions 210-236 (ADDEDSDDSIDWDSDSESETESSEDEN) are enriched in acidic residues. Residues 241-271 (MRERFLKRSTEKGEDKGDDDKRKDKRKEQKL) are compositionally biased toward basic and acidic residues. Residues 642–818 (FHMHINLELL…ETVVMHRSEP (177 aa)) enclose the PCI domain. Residues 851–911 (FQRGNMGNRG…QQQVQTIDEE (61 aa)) are disordered. The span at 885-896 (QRNRNQRGHHKN) shows a compositional bias: basic residues. Positions 897-911 (QQQQQQQQVQTIDEE) are enriched in low complexity.

Belongs to the eIF-3 subunit C family. In terms of assembly, component of the eukaryotic translation initiation factor 3 (eIF-3) complex. The eIF-3 complex interacts with pix.

Its subcellular location is the cytoplasm. Component of the eukaryotic translation initiation factor 3 (eIF-3) complex, which is involved in protein synthesis of a specialized repertoire of mRNAs and, together with other initiation factors, stimulates binding of mRNA and methionyl-tRNAi to the 40S ribosome. The eIF-3 complex specifically targets and initiates translation of a subset of mRNAs involved in cell proliferation. This is Eukaryotic translation initiation factor 3 subunit C from Drosophila pseudoobscura pseudoobscura (Fruit fly).